We begin with the raw amino-acid sequence, 85 residues long: Putative membrane protein insertion efficiency factor (85 aa).

The protein belongs to the UPF0161 family.

The protein resides in the cell inner membrane. Could be involved in insertion of integral membrane proteins into the membrane. In Sodalis glossinidius (strain morsitans), this protein is Putative membrane protein insertion efficiency factor.